Reading from the N-terminus, the 301-residue chain is Rhodopsin (301 aa).

Residues 1–18 are Extracellular-facing; the sequence is LHMIHLHWYQYPPMNPMM. The helical transmembrane segment at 19 to 43 threads the bilayer; that stretch reads YPLLLIFMLFTGILCLAGNFVTIWV. At 44 to 55 the chain is on the cytoplasmic side; the sequence is FMNTKSLRTPAN. A helical transmembrane segment spans residues 56 to 78; the sequence is LLVVNLAMSDFLMMFTMFPPMMV. Topologically, residues 79 to 92 are extracellular; it reads TCYYHTWTLGPTFC. Cysteine 92 and cysteine 169 are joined by a disulfide. Residues 93-115 form a helical membrane-spanning segment; the sequence is QVYGFLGNLCGCASIWTMVFITF. A 'Ionic lock' involved in activated form stabilization motif is present at residues 116–118; that stretch reads DRY. Topologically, residues 116 to 134 are cytoplasmic; it reads DRYNVIVKGVAGEPLSTKK. Residues 135-155 form a helical membrane-spanning segment; the sequence is ASLWILIVWVLSLAWCMAPFF. Over 156-182 the chain is Extracellular; it reads GWNRYVPEGNLTGCGTDYLSEDILSRS. A glycan (N-linked (GlcNAc...) asparagine) is linked at asparagine 165. Residues 183-204 traverse the membrane as a helical segment; that stretch reads YLYIYSTWVYFLPLTITIYCYV. Residues 205–245 lie on the Cytoplasmic side of the membrane; the sequence is FIIKAVAAHEKGMRDQAKKMGIKSLRNEEAQKTSAECRLAK. A helical membrane pass occupies residues 246 to 267; the sequence is IAMTTVALWFIAWTPYLLINWV. Residues 268–278 are Extracellular-facing; it reads GMFARSYLSPV. Residues 279 to 300 form a helical membrane-spanning segment; that stretch reads YTIWGYVFAKANAVYNPIVYAI. An N6-(retinylidene)lysine modification is found at lysine 288.

Belongs to the G-protein coupled receptor 1 family. Opsin subfamily. Homodimer. Interacts with GNAQ. In terms of processing, contains one covalently linked retinal chromophore.

It is found in the cell projection. Its subcellular location is the rhabdomere membrane. In terms of biological role, photoreceptor required for image-forming vision at low light intensity. Can use both retinal and 3-dehydroretinal as visual pigment. Light-induced isomerization of 11-cis to all-trans retinal triggers a conformational change that activates signaling via G-proteins. Signaling via GNAQ probably mediates the activation of phospholipase C. This chain is Rhodopsin (RHO), found in Procambarus milleri (Miami cave crayfish).